Reading from the N-terminus, the 163-residue chain is Large ribosomal subunit protein uL10 (163 aa).

The protein belongs to the universal ribosomal protein uL10 family. As to quaternary structure, part of the ribosomal stalk of the 50S ribosomal subunit. The N-terminus interacts with L11 and the large rRNA to form the base of the stalk. The C-terminus forms an elongated spine to which L12 dimers bind in a sequential fashion forming a multimeric L10(L12)X complex.

Forms part of the ribosomal stalk, playing a central role in the interaction of the ribosome with GTP-bound translation factors. This chain is Large ribosomal subunit protein uL10, found in Haemophilus ducreyi (strain 35000HP / ATCC 700724).